Reading from the N-terminus, the 183-residue chain is Ribosome maturation factor RimM (183 aa).

The PRC barrel domain maps to 104-183 (EGDYYWKDLI…TIEVDWDPGF (80 aa)).

Belongs to the RimM family. In terms of assembly, binds ribosomal protein uS19.

The protein resides in the cytoplasm. Functionally, an accessory protein needed during the final step in the assembly of 30S ribosomal subunit, possibly for assembly of the head region. Essential for efficient processing of 16S rRNA. May be needed both before and after RbfA during the maturation of 16S rRNA. It has affinity for free ribosomal 30S subunits but not for 70S ribosomes. The protein is Ribosome maturation factor RimM of Cronobacter sakazakii (strain ATCC BAA-894) (Enterobacter sakazakii).